The primary structure comprises 160 residues: Succinate dehydrogenase assembly factor 2-B, mitochondrial (160 aa).

The transit peptide at 1-23 directs the protein to the mitochondrion; the sequence is MLRQLKLTLNISRWIFMPWQRHA.

This sequence belongs to the SDHAF2 family. As to quaternary structure, interacts with the flavoprotein subunit within the SDH catalytic dimer.

The protein resides in the mitochondrion matrix. Its function is as follows. Plays an essential role in the assembly of succinate dehydrogenase (SDH), an enzyme complex (also referred to as respiratory complex II) that is a component of both the tricarboxylic acid (TCA) cycle and the mitochondrial electron transport chain, and which couples the oxidation of succinate to fumarate with the reduction of ubiquinone (coenzyme Q) to ubiquinol. Required for flavinylation (covalent attachment of FAD) of the flavoprotein subunit of the SDH catalytic dimer. The protein is Succinate dehydrogenase assembly factor 2-B, mitochondrial of Drosophila pseudoobscura pseudoobscura (Fruit fly).